Reading from the N-terminus, the 113-residue chain is Protein S100-A9 (113 aa).

An N-acetylalanine modification is found at Ala-2. EF-hand domains follow at residues 13-48 (ITTI…QLAT) and 55-90 (RNEA…LIFA). His-21 is a binding site for Zn(2+). Ca(2+) is bound by residues Ser-24 and His-29. Asp-31 contacts Zn(2+). Ca(2+) is bound by residues Thr-32, Glu-37, Asp-68, Asn-70, Asp-72, Gln-74, and Glu-79. Residues His-92 and His-96 each contribute to the Zn(2+) site. His-107 is modified (pros-methylhistidine).

It belongs to the S-100 family. Homodimer. Preferentially exists as a heterodimer or heterotetramer with S100A8 known as calprotectin (S100A8/A9). S100A9 interacts with ATP2A2. S100A9 interacts with AGER, and with the heterodimeric complex formed by TLR4 and LY96 in the presence of calcium and/or zinc ions. S100A9 binds quinoline-3-carboxamides in the presence of calcium and/or zinc ions. S100A9 interacts with amyloid-beta protein 40. Calprotectin (S100A8/9) interacts with CEACAM3 and tubulin filaments in a calcium-dependent manner. Heterotetrameric calprotectin (S100A8/A9) interacts with ANXA6 and associates with tubulin filaments in activated monocytes. Calprotectin (S100A8/9) interacts with NCF2/P67PHOX, RAC1, RAC2, CYBA and CYBB. Calprotectin (S100A8/9) interacts with NOS2 to form the iNOS-S100A8/A9 transnitrosylase complex; induced by LDL(ox). Calprotectin (S100A8/9) interacts with CD69. Phosphorylated. Phosphorylation inhibits activation of tubulin polymerization. In terms of processing, methylation at His-107 by METTL9 reduces zinc-binding without affecting heterodimerization with S100A8.

The protein localises to the secreted. It is found in the cytoplasm. The protein resides in the cytoskeleton. It localises to the cell membrane. S100A9 is a calcium- and zinc-binding protein which plays a prominent role in the regulation of inflammatory processes and immune response. It can induce neutrophil chemotaxis, adhesion, can increase the bactericidal activity of neutrophils by promoting phagocytosis via activation of SYK, PI3K/AKT, and ERK1/2 and can induce degranulation of neutrophils by a MAPK-dependent mechanism. Predominantly found as calprotectin (S100A8/A9) which has a wide plethora of intra- and extracellular functions. The intracellular functions include: facilitating leukocyte arachidonic acid trafficking and metabolism, modulation of the tubulin-dependent cytoskeleton during migration of phagocytes and activation of the neutrophilic NADPH-oxidase. Also participates in regulatory T-cell differentiation together with CD69. Activates NADPH-oxidase by facilitating the enzyme complex assembly at the cell membrane, transferring arachidonic acid, an essential cofactor, to the enzyme complex and S100A8 contributes to the enzyme assembly by directly binding to NCF2/P67PHOX. The extracellular functions involve pro-inflammatory, antimicrobial, oxidant-scavenging and apoptosis-inducing activities. Its pro-inflammatory activity includes recruitment of leukocytes, promotion of cytokine and chemokine production, and regulation of leukocyte adhesion and migration. Acts as an alarmin or a danger associated molecular pattern (DAMP) molecule and stimulates innate immune cells via binding to pattern recognition receptors such as Toll-like receptor 4 (TLR4) and receptor for advanced glycation endproducts (AGER). Binding to TLR4 and AGER activates the MAP-kinase and NF-kappa-B signaling pathways resulting in the amplification of the pro-inflammatory cascade. Has antimicrobial activity towards bacteria and fungi and exerts its antimicrobial activity probably via chelation of Zn(2+) which is essential for microbial growth. Can induce cell death via autophagy and apoptosis and this occurs through the cross-talk of mitochondria and lysosomes via reactive oxygen species (ROS) and the process involves BNIP3. Can regulate neutrophil number and apoptosis by an anti-apoptotic effect; regulates cell survival via ITGAM/ITGB and TLR4 and a signaling mechanism involving MEK-ERK. Its role as an oxidant scavenger has a protective role in preventing exaggerated tissue damage by scavenging oxidants. The iNOS-S100A8/A9 transnitrosylase complex is proposed to direct selective inflammatory stimulus-dependent S-nitrosylation of multiple targets such as GAPDH, NXA5, EZR, MSN and VIM by recognizing a [IL]-x-C-x-x-[DE] motif. This is Protein S100-A9 (S100a9) from Mus musculus (Mouse).